A 352-amino-acid polypeptide reads, in one-letter code: Ribosome biogenesis protein BRX1 homolog (352 aa).

Residues 1-47 (MAATKRKRRGDLEVQAKKPKKNRKDAGQPAKQADVAKEAEEEKDRIP) form a disordered region. Residues 34 to 46 (DVAKEAEEEKDRI) are compositionally biased toward basic and acidic residues. The Brix domain occupies 59 to 248 (ERILIFSSRG…LIKIFQGSFG (190 aa)). Residue lysine 159 forms a Glycyl lysine isopeptide (Lys-Gly) (interchain with G-Cter in SUMO2) linkage. Serine 260 is subject to Phosphoserine. The residue at position 275 (lysine 275) is an N6-acetyllysine. Positions 281-301 (QVKDVQKSRKKEPKTILPHDP) are disordered. Glycyl lysine isopeptide (Lys-Gly) (interchain with G-Cter in SUMO2) cross-links involve residues lysine 313 and lysine 321.

Belongs to the BRX1 family.

The protein resides in the nucleus. Its subcellular location is the nucleolus. Functionally, required for biogenesis of the 60S ribosomal subunit. The sequence is that of Ribosome biogenesis protein BRX1 homolog (Brix1) from Rattus norvegicus (Rat).